Reading from the N-terminus, the 100-residue chain is Urease subunit gamma (100 aa).

Belongs to the urease gamma subunit family. In terms of assembly, heterotrimer of UreA (gamma), UreB (beta) and UreC (alpha) subunits. Three heterotrimers associate to form the active enzyme.

The protein resides in the cytoplasm. The catalysed reaction is urea + 2 H2O + H(+) = hydrogencarbonate + 2 NH4(+). Its pathway is nitrogen metabolism; urea degradation; CO(2) and NH(3) from urea (urease route): step 1/1. The protein is Urease subunit gamma of Actinobacillus pleuropneumoniae serotype 5b (strain L20).